We begin with the raw amino-acid sequence, 304 residues long: Acetylxylan esterase A (304 aa).

The first 24 residues, 1-24 (MLLSTHLLFVITTLVTSLLHPIDG), serve as a signal peptide directing secretion. Residue serine 148 is the Charge relay system of the active site. The N-linked (GlcNAc...) asparagine glycan is linked to asparagine 190.

The protein belongs to the carbohydrate esterase 1 (CE1) family. AxeA subfamily. As to quaternary structure, monomer.

Its subcellular location is the secreted. It carries out the reaction Deacetylation of xylans and xylo-oligosaccharides.. It participates in glycan degradation; xylan degradation. Inactivated by di-isopropylfluorophosphate and phenylmethylsulfonylfluorid (PMSF), a specific inhibitor of serine esterases. Acetylxylan esterase involved in the hydrolysis of xylan, a major structural heterogeneous polysaccharide found in plant biomass representing the second most abundant polysaccharide in the biosphere, after cellulose. Degrades acetylated xylans by cleaving acetyl side groups from the hetero-xylan backbone. The polypeptide is Acetylxylan esterase A (axeA) (Aspergillus awamori (Black koji mold)).